The sequence spans 396 residues: Major capsid protein (396 aa).

This sequence belongs to the NCLDV major capsid protein family.

The protein localises to the virion. In terms of biological role, major protein of the capsid. The sequence is that of Major capsid protein (MCP) from Pyramimonas plurioculata (PoV01).